Here is a 237-residue protein sequence, read N- to C-terminus: Cysteine-rich venom protein DIS2 (237 aa).

A signal peptide spans 1–18; sequence MFVFILLSLAAVLQQSFG. The SCP domain occupies 37–165; that stretch reads VDKHNAFRRS…SYNYFYVCQY (129 aa). Cystine bridges form between cysteine 74–cysteine 152, cysteine 91–cysteine 166, cysteine 147–cysteine 163, cysteine 185–cysteine 192, cysteine 188–cysteine 197, cysteine 201–cysteine 234, and cysteine 219–cysteine 232. The ShKT domain occupies 201-234; it reads CSREDVFMNCKSLVAQSNCQDDYIRKNCPATCFC.

This sequence belongs to the CRISP family. As to expression, expressed by the venom gland.

It localises to the secreted. Weakly blocks contraction of smooth muscle elicited by high potassium-induced depolarization, but does not block caffeine-stimulated contraction. May target voltage-gated calcium channels on smooth muscle. This chain is Cysteine-rich venom protein DIS2, found in Dispholidus typus (Boomslang).